Reading from the N-terminus, the 343-residue chain is MQRITLTRPDDWHLHLRDGEQLATVLPHTATVFGRAIIMPNLKPPVTTVDQAAAYRERILAALPAGAHFEPLMTLYLTDNTPPAEIEKAAASGFVHAVKLYPAGATTNSDAGVTDLARCEETLAAMAERGLPLCVHGEVTRDEVDIFDREAHFIDEVLDPLVQRHSRLRVVFEHITTQAAVDYLRQAPDRVGATLTVQHLMANRNHMLVGGVRPHYYCLPILKRERDRQALVEAATSGHPRFFLGTDSAPHPKGAKESACGCAGVYSAHAALPFYAEIFEAAGALDRLEGFASHHGADFYGLPRNRDSVTLERAATPIPEAFPMGDDTLVPFRAGGEVAWRVV.

Zn(2+)-binding residues include His-13 and His-15. Substrate contacts are provided by residues 15-17 (HLR) and Asn-41. Zn(2+) contacts are provided by Lys-99, His-136, and His-174. At Lys-99 the chain carries N6-carboxylysine. Residue His-136 participates in substrate binding. Leu-219 serves as a coordination point for substrate. Asp-247 contributes to the Zn(2+) binding site. Asp-247 is a catalytic residue. His-251 and Ala-263 together coordinate substrate.

It belongs to the metallo-dependent hydrolases superfamily. DHOase family. Class II DHOase subfamily. As to quaternary structure, homodimer. Zn(2+) is required as a cofactor.

It catalyses the reaction (S)-dihydroorotate + H2O = N-carbamoyl-L-aspartate + H(+). It functions in the pathway pyrimidine metabolism; UMP biosynthesis via de novo pathway; (S)-dihydroorotate from bicarbonate: step 3/3. Catalyzes the reversible cyclization of carbamoyl aspartate to dihydroorotate. The polypeptide is Dihydroorotase (Alkalilimnicola ehrlichii (strain ATCC BAA-1101 / DSM 17681 / MLHE-1)).